Consider the following 158-residue polypeptide: MNKVPLTEKGAQQLREELQELKTVVRPKVVTAIAEARAHGDLKENAEYHAAREEQGFVEGRIRDLEHQLAHAQIIDVSKLQKDGRVVFGVTVDLVNIETDEEASYQIVGDLEANIKENKISINSPIARALIGKREGDEIQVQAPSGIILYEIAAIGYQ.

Positions Met1–Arg26 form a coiled coil.

This sequence belongs to the GreA/GreB family.

Its function is as follows. Necessary for efficient RNA polymerase transcription elongation past template-encoded arresting sites. The arresting sites in DNA have the property of trapping a certain fraction of elongating RNA polymerases that pass through, resulting in locked ternary complexes. Cleavage of the nascent transcript by cleavage factors such as GreA or GreB allows the resumption of elongation from the new 3'terminus. GreA releases sequences of 2 to 3 nucleotides. This chain is Transcription elongation factor GreA, found in Nitrosococcus oceani (strain ATCC 19707 / BCRC 17464 / JCM 30415 / NCIMB 11848 / C-107).